Here is a 55-residue protein sequence, read N- to C-terminus: Large ribosomal subunit protein bL33 (55 aa).

The protein belongs to the bacterial ribosomal protein bL33 family.

This chain is Large ribosomal subunit protein bL33, found in Beijerinckia indica subsp. indica (strain ATCC 9039 / DSM 1715 / NCIMB 8712).